Here is a 141-residue protein sequence, read N- to C-terminus: Large ribosomal subunit protein uL11 (141 aa).

This sequence belongs to the universal ribosomal protein uL11 family. In terms of assembly, part of the ribosomal stalk of the 50S ribosomal subunit. Interacts with L10 and the large rRNA to form the base of the stalk. L10 forms an elongated spine to which L12 dimers bind in a sequential fashion forming a multimeric L10(L12)X complex. In terms of processing, one or more lysine residues are methylated.

Functionally, forms part of the ribosomal stalk which helps the ribosome interact with GTP-bound translation factors. The chain is Large ribosomal subunit protein uL11 from Gloeobacter violaceus (strain ATCC 29082 / PCC 7421).